The sequence spans 75 residues: MPHIDIKCFPRELDEQQKAALAADITDVIIRHLNSKDSSISISLQQIQPESWQAIWDAEIAPQMEALIKKPGYSM.

Catalysis depends on proline 2, which acts as the Proton acceptor; via imino nitrogen.

It belongs to the 4-oxalocrotonate tautomerase family. PptA subfamily. In terms of assembly, homodimer.

The protein localises to the cytoplasm. This is Tautomerase PptA from Escherichia coli O127:H6 (strain E2348/69 / EPEC).